Consider the following 212-residue polypeptide: Outer surface protein C (212 aa).

Positions 1–18 (MKKNTLSAILMTLFLFIS) are cleaved as a signal peptide. A lipid anchor (N-palmitoyl cysteine) is attached at cysteine 19. Cysteine 19 carries S-diacylglycerol cysteine lipidation.

This sequence belongs to the OspC lipoprotein family. As to quaternary structure, homodimer. Interacts with tick Ixodes ricinus salivary protein Iric-1. Binds human (host) plasminogen. In terms of processing, the N-terminus is blocked.

It is found in the cell outer membrane. Its subcellular location is the cell surface. Functionally, major immunodominant protein in mammalian hosts. Required for initial stages of mammalian infection. Inhibits macrophage-mediated phagocytosis of the bacteria. Binds human plasminogen; this probably confers an extracellular protease activity on the bacteria that allows it to traverse tissue. Unlike closely related strain B31, its interaction with Ixodes ricinus salivary protein Iric-1 does not protect against antibody-mediated destruction in vitro. The sequence is that of Outer surface protein C from Borreliella afzelii (strain PKo) (Borrelia afzelii).